Consider the following 240-residue polypeptide: Ribosomal RNA small subunit methyltransferase G (240 aa).

S-adenosyl-L-methionine is bound by residues Gly-79, 130–131 (AE), and Arg-149.

This sequence belongs to the methyltransferase superfamily. RNA methyltransferase RsmG family.

Its subcellular location is the cytoplasm. Its function is as follows. Specifically methylates the N7 position of a guanine in 16S rRNA. In Moorella thermoacetica (strain ATCC 39073 / JCM 9320), this protein is Ribosomal RNA small subunit methyltransferase G.